Consider the following 475-residue polypeptide: Glutamate--tRNA ligase 2 (475 aa).

The short motif at 11–21 (PSPTGFLHIGG) is the 'HIGH' region element. The span at 116 to 133 (AEGRPPRYDGTWRDKDPA) shows a compositional bias: basic and acidic residues. Residues 116-137 (AEGRPPRYDGTWRDKDPAEAPS) are disordered. The 'KMSKS' region motif lies at 240–244 (KLSKR). Lysine 243 provides a ligand contact to ATP.

The protein belongs to the class-I aminoacyl-tRNA synthetase family. Glutamate--tRNA ligase type 1 subfamily. As to quaternary structure, monomer.

Its subcellular location is the cytoplasm. The enzyme catalyses tRNA(Glu) + L-glutamate + ATP = L-glutamyl-tRNA(Glu) + AMP + diphosphate. Functionally, catalyzes the attachment of glutamate to tRNA(Glu) in a two-step reaction: glutamate is first activated by ATP to form Glu-AMP and then transferred to the acceptor end of tRNA(Glu). This Chelativorans sp. (strain BNC1) protein is Glutamate--tRNA ligase 2.